Here is a 512-residue protein sequence, read N- to C-terminus: 2,3-bisphosphoglycerate-independent phosphoglycerate mutase (512 aa).

Mn(2+) is bound by residues Asp11 and Ser61. The active-site Phosphoserine intermediate is the Ser61. Substrate is bound by residues His122, 152–153, Arg184, Arg190, 259–262, and Lys332; these read RD and RADR. Mn(2+) contacts are provided by Asp399, His403, Asp440, His441, and His459.

The protein belongs to the BPG-independent phosphoglycerate mutase family. In terms of assembly, monomer. It depends on Mn(2+) as a cofactor.

It catalyses the reaction (2R)-2-phosphoglycerate = (2R)-3-phosphoglycerate. The protein operates within carbohydrate degradation; glycolysis; pyruvate from D-glyceraldehyde 3-phosphate: step 3/5. In terms of biological role, catalyzes the interconversion of 2-phosphoglycerate and 3-phosphoglycerate. This chain is 2,3-bisphosphoglycerate-independent phosphoglycerate mutase, found in Francisella philomiragia subsp. philomiragia (strain ATCC 25017 / CCUG 19701 / FSC 153 / O#319-036).